The sequence spans 309 residues: Tumor necrosis factor ligand superfamily member 13B (309 aa).

The Cytoplasmic portion of the chain corresponds to 1–47 (MDESAKTLPPPCLCFCSEKGEDMKVGYDPITPQKEEGAWFGICRDGR). A helical; Signal-anchor for type II membrane protein membrane pass occupies residues 48–68 (LLAATLLLALLSSSFTAMSLY). At 69-309 (QLAALQADLM…DTFFGALKLL (241 aa)) the chain is on the extracellular side. The disordered stretch occupies residues 110–140 (PAAPRPHNSSRGHRNRRAFQGPEETEQDVDL). Residues Asn117 and Asn266 are each glycosylated (N-linked (GlcNAc...) asparagine). Residues 117 to 126 (NSSRGHRNRR) show a composition bias toward basic residues. One can recognise a THD domain in the interval 169 to 308 (DCLQLIADSD…DDTFFGALKL (140 aa)). Cys256 and Cys269 are joined by a disulfide.

Belongs to the tumor necrosis factor family. Homotrimer. Isoform 2 heteromultimerizes with isoform 1, probably limiting the amount of functional isoform 1 on the cell surface. In terms of processing, the soluble form derives from the membrane form by proteolytic processing. Post-translationally, isoform 2 is not efficiently shed from the membrane unlike isoform 1. As to expression, isoform 2 is expressed in many myeloid cell lines.

The protein localises to the cell membrane. The protein resides in the secreted. Functionally, cytokine that binds to TNFRSF13B/TACI and TNFRSF17/BCMA. TNFSF13/APRIL binds to the same 2 receptors. Together, they form a 2 ligands -2 receptors pathway involved in the stimulation of B- and T-cell function and the regulation of humoral immunity. A third B-cell specific BAFF-receptor (BAFFR/BR3) promotes the survival of mature B-cells and the B-cell response. In terms of biological role, isoform 2 seems to inhibit isoform 1 secretion and bioactivity. The protein is Tumor necrosis factor ligand superfamily member 13B (Tnfsf13b) of Mus musculus (Mouse).